A 196-amino-acid polypeptide reads, in one-letter code: Peptide deformylase (196 aa).

Fe cation contacts are provided by C105 and H147. E148 is an active-site residue. Fe cation is bound at residue H151.

Belongs to the polypeptide deformylase family. Requires Fe(2+) as cofactor.

The enzyme catalyses N-terminal N-formyl-L-methionyl-[peptide] + H2O = N-terminal L-methionyl-[peptide] + formate. Removes the formyl group from the N-terminal Met of newly synthesized proteins. Requires at least a dipeptide for an efficient rate of reaction. N-terminal L-methionine is a prerequisite for activity but the enzyme has broad specificity at other positions. This Christiangramia forsetii (strain DSM 17595 / CGMCC 1.15422 / KT0803) (Gramella forsetii) protein is Peptide deformylase.